Consider the following 198-residue polypeptide: Lipid A 4'-phosphatase (198 aa).

A helical transmembrane segment spans residues 143-165; it reads AGQHTILQVTIGSLIAWGFAYLF.

The protein belongs to the lipid A LpxF 4'-phosphatase family.

The protein resides in the cell inner membrane. The protein operates within bacterial outer membrane biogenesis; LPS lipid A biosynthesis. Its function is as follows. Removes the 4'-phosphate group from tetra- and hexaacylated lipid A species, has no 1-phosphatase or Kdo hydrolase activity. Absence of the 4'-phosphate group renders the bacteria resistant to host-derived cationic antimicrobial peptides (CAMP), allowing it to camouflage itself from the host innate immune response, and plays a critical role in the long-term colonization of the host's stomach. This chain is Lipid A 4'-phosphatase, found in Helicobacter pylori (strain J99 / ATCC 700824) (Campylobacter pylori J99).